Reading from the N-terminus, the 330-residue chain is Atypical chemokine receptor 1 (330 aa).

The Extracellular segment spans residues 1 to 57 (MGNCLYPVADDNSTKLAIKEDFLIDFPEDYYPDYNETDVEAAAPCHSCSLLNYSSLP). Asn-12, Asn-35, and Asn-52 each carry an N-linked (GlcNAc...) asparagine glycan. 2 cysteine pairs are disulfide-bonded: Cys-45–Cys-270 and Cys-123–Cys-189. Residues 58 to 78 (FFILVSILGILASGTILYALL) traverse the membrane as a helical segment. At 79 to 89 (RPLFRWQLYQD) the chain is on the cytoplasmic side. The helical transmembrane segment at 90–110 (RSTLVQLAVGSALFSIVVPIL) threads the bilayer. The Extracellular portion of the chain corresponds to 111 to 123 (ARGLSGALITSLC). The chain crosses the membrane as a helical span at residues 124–147 (HLAHLVAYGSAFAQALLIGYHACL). Topologically, residues 148–160 (GPQLGAGQVPGLR) are cytoplasmic. The helical transmembrane segment at 161–181 (LGVTVGLWGVAALLSLPVVLG) threads the bilayer. Residues 182–201 (SDTSQGLCTVTFSGEWETLR) are Extracellular-facing. Residues 202–222 (YIHAAACFAIFVLLPLGLLGT) form a helical membrane-spanning segment. At 223–238 (KGLKTVLGRAPCPWVD) the chain is on the cytoplasmic side. The helical transmembrane segment at 239–259 (VLWVWFIFWWPQGMTLGLDSL) threads the bilayer. Topologically, residues 260–281 (VRSKAIVVSTCPAQQALDMLLD) are extracellular. A helical transmembrane segment spans residues 282–302 (VAEALAILHCVATPLLLAWVC). At 303-330 (YQATHTSPPSLPLPTTQTSHLDTLGGKS) the chain is on the cytoplasmic side.

It belongs to the G-protein coupled receptor 1 family. Atypical chemokine receptor subfamily.

It localises to the early endosome. Its subcellular location is the recycling endosome. The protein localises to the membrane. Its function is as follows. Atypical chemokine receptor that controls chemokine levels and localization via high-affinity chemokine binding that is uncoupled from classic ligand-driven signal transduction cascades, resulting instead in chemokine sequestration, degradation, or transcytosis. Also known as interceptor (internalizing receptor) or chemokine-scavenging receptor or chemokine decoy receptor. Has a promiscuous chemokine-binding profile, interacting with inflammatory chemokines of both the CXC and the CC subfamilies but not with homeostatic chemokines. Acts as a receptor for chemokines including CCL2, CCL5, CCL7, CCL11, CCL13, CCL14, CCL17, CXCL5, CXCL6, IL8/CXCL8, CXCL11, GRO, RANTES, MCP-1 and TARC. May regulate chemokine bioavailability and, consequently, leukocyte recruitment through two distinct mechanisms: when expressed in endothelial cells, it sustains the abluminal to luminal transcytosis of tissue-derived chemokines and their subsequent presentation to circulating leukocytes; when expressed in erythrocytes, serves as blood reservoir of cognate chemokines but also as a chemokine sink, buffering potential surges in plasma chemokine levels. This is Atypical chemokine receptor 1 (ACKR1) from Bos taurus (Bovine).